A 1496-amino-acid chain; its full sequence is Carbamoyl-phosphate synthase [ammonia], mitochondrial (1496 aa).

The N-terminal 33 residues, 1 to 33, are a transit peptide targeting the mitochondrion; it reads MTRILSVFKTAKTGVLNAAAHRYRGFSKAGVRL. The segment at 34-214 is anthranilate phosphoribosyltransferase homolog; sequence MSVKAQTANL…TKVFGKGNPV (181 aa). The Glutamine amidotransferase type-1 domain maps to 215 to 401; the sequence is RIVAVDCGVK…MSLIKKGKGT (187 aa). Catalysis depends on Cys290, which acts as the For GATase activity. 2 ATP-grasp domains span residues 548–740 and 1090–1281; these read SDKL…KIAL and SAVL…KVMI. The 145-residue stretch at 1352–1496 folds into the MGS-like domain; the sequence is FKLPQKGILI…YRQFGGAKPS (145 aa). Residues Thr1388, Thr1391, Trp1407, Asn1433, Asn1436, and Asn1445 each coordinate N-acetyl-L-glutamate.

It is found in the mitochondrion. It carries out the reaction hydrogencarbonate + NH4(+) + 2 ATP = carbamoyl phosphate + 2 ADP + phosphate + 2 H(+). Requires N-acetyl-L-glutamate (NAG) as an allosteric activator. Its function is as follows. Involved in the urea cycle of ureotelic animals where the enzyme plays an important role in removing excess ammonia from the cell. The polypeptide is Carbamoyl-phosphate synthase [ammonia], mitochondrial (Aquarana catesbeiana (American bullfrog)).